Consider the following 184-residue polypeptide: Urease accessory protein UreE (184 aa).

Residues 147 to 184 (EHHGHSHSHSHSHDHDHDHDHDHQHGPSCSHGHHHGHR) form a disordered region. A compositionally biased stretch (basic and acidic residues) spans 157–171 (HSHDHDHDHDHDHQH).

The protein belongs to the UreE family.

The protein localises to the cytoplasm. In terms of biological role, involved in urease metallocenter assembly. Binds nickel. Probably functions as a nickel donor during metallocenter assembly. This Burkholderia mallei (strain ATCC 23344) protein is Urease accessory protein UreE.